Consider the following 194-residue polypeptide: Lysozyme g-like protein 1 (194 aa).

Positions 1–19 (MSALWLLLGLLALMDLSES) are cleaved as a signal peptide. 2 disulfide bridges follow: Cys-24–Cys-80 and Cys-38–Cys-49.

The protein belongs to the glycosyl hydrolase 23 family.

It localises to the secreted. In Homo sapiens (Human), this protein is Lysozyme g-like protein 1 (LYG1).